Consider the following 593-residue polypeptide: NADH-quinone oxidoreductase subunit C/D (593 aa).

Residues 1–184 are NADH dehydrogenase I subunit C; that stretch reads MTADNAIFIP…DPYSLTLAKQ (184 aa). Residues 208 to 593 form an NADH dehydrogenase I subunit D region; it reads DYMFLNLGPN…IDFVMADVDR (386 aa).

In the N-terminal section; belongs to the complex I 30 kDa subunit family. The protein in the C-terminal section; belongs to the complex I 49 kDa subunit family. In terms of assembly, NDH-1 is composed of 13 different subunits. Subunits NuoB, CD, E, F, and G constitute the peripheral sector of the complex.

It localises to the cell inner membrane. The enzyme catalyses a quinone + NADH + 5 H(+)(in) = a quinol + NAD(+) + 4 H(+)(out). In terms of biological role, NDH-1 shuttles electrons from NADH, via FMN and iron-sulfur (Fe-S) centers, to quinones in the respiratory chain. The immediate electron acceptor for the enzyme in this species is believed to be ubiquinone. Couples the redox reaction to proton translocation (for every two electrons transferred, four hydrogen ions are translocated across the cytoplasmic membrane), and thus conserves the redox energy in a proton gradient. This chain is NADH-quinone oxidoreductase subunit C/D, found in Pseudomonas putida (strain GB-1).